Consider the following 57-residue polypeptide: Protein GnsB (57 aa).

The protein belongs to the gns family.

Functionally, overexpression increases levels of unsaturated fatty acids and suppresses both the temperature-sensitive fabA6 mutation and cold-sensitive secG null mutation. The chain is Protein GnsB (gnsB) from Escherichia coli (strain K12).